Here is a 226-residue protein sequence, read N- to C-terminus: PKHD-type hydroxylase PST_0995 (226 aa).

The Fe2OG dioxygenase domain maps to 78–178 (KVFPPLFNCY…RLASFFWIQS (101 aa)). Fe cation-binding residues include histidine 96, aspartate 98, and histidine 159. Residue arginine 169 participates in 2-oxoglutarate binding.

Fe(2+) serves as cofactor. Requires L-ascorbate as cofactor.

In Stutzerimonas stutzeri (strain A1501) (Pseudomonas stutzeri), this protein is PKHD-type hydroxylase PST_0995.